Here is a 69-residue protein sequence, read N- to C-terminus: UPF0337 protein XAC4007 (69 aa).

It belongs to the UPF0337 (CsbD) family.

In Xanthomonas axonopodis pv. citri (strain 306), this protein is UPF0337 protein XAC4007.